A 659-amino-acid chain; its full sequence is Pesticidal crystal protein Cry3Ba (659 aa).

The disordered stretch occupies residues 1–41 (MIRMGGRKMNPNNRSEYDTIKVTPNSELPTNHNQYPLADNP). Residues 22 to 41 (VTPNSELPTNHNQYPLADNP) are compositionally biased toward polar residues.

The protein belongs to the delta endotoxin family.

Its function is as follows. Promotes colloidosmotic lysis by binding to the midgut epithelial cells of Coleoptera. The sequence is that of Pesticidal crystal protein Cry3Ba (cry3Ba) from Bacillus thuringiensis subsp. tolworthi.